Here is an 857-residue protein sequence, read N- to C-terminus: Bifunctional levopimaradiene synthase, chloroplastic (857 aa).

The N-terminal 33 residues, 1–33 (MALPSSSLSSQIHTGATTQCIPHFHGSLNAGTS), are a transit peptide targeting the chloroplast. Lysine 257 lines the substrate pocket. Residues aspartate 390 and aspartate 392 each contribute to the Mg(2+) site. The DXDD motif signature appears at 390 to 393 (DIDD). Residue lysine 477 coordinates substrate. Mg(2+)-binding residues include aspartate 609, aspartate 613, asparagine 753, threonine 757, and glutamate 761. The short motif at 609-613 (DDLYD) is the DDXXD motif element.

The protein belongs to the terpene synthase family. Tpsd subfamily. The cofactor is Mg(2+).

Its subcellular location is the plastid. The protein resides in the chloroplast. It carries out the reaction (2E,6E,10E)-geranylgeranyl diphosphate = (+)-copalyl diphosphate. The catalysed reaction is (+)-copalyl diphosphate = abieta-7,13-diene + diphosphate. The enzyme catalyses (+)-copalyl diphosphate = abieta-8(14),12-diene + diphosphate. It catalyses the reaction (+)-copalyl diphosphate = neoabietadiene + diphosphate. The protein operates within terpene metabolism; oleoresin biosynthesis. Its function is as follows. Involved in defensive oleoresin formation in conifers in response to insect attack or other injury. Involved in diterpene (C20) olefins biosynthesis. Bifunctional enzyme that catalyzes two sequential cyclizations of geranylgeranyl diphosphate (GGPP) to levopimaradiene. Levopimaradiene is the major products of the enzyme with abietadiene and neoabietadiene. No activity with farnesyl diphosphate (FPP) as substrate. This chain is Bifunctional levopimaradiene synthase, chloroplastic, found in Pinus contorta (Shore pine).